The following is a 220-amino-acid chain: uncharacterized protein (220 aa).

Positions Asp-165–Ile-202 form a coiled coil.

This is an uncharacterized protein from Pasteurella multocida (strain Pm70).